We begin with the raw amino-acid sequence, 868 residues long: Translation initiation factor IF-2 (868 aa).

A compositionally biased stretch (basic and acidic residues) spans 103–183; it reads RSELPETSDR…RQAAAERETV (81 aa). The tract at residues 103–274 is disordered; it reads RSELPETSDR…GRPMLMPEQK (172 aa). A compositionally biased stretch (pro residues) spans 190–207; sequence VAAPPIPRPAPEPRPPAR. The segment covering 213-254 has biased composition (basic and acidic residues); sequence PKAEAPRAHPAERETEARGDKRSAGLSRKDEYRELQGDDFRK. The segment covering 255-264 has biased composition (basic residues); sequence GGGKRKKPKT. Residues 369–538 enclose the tr-type G domain; it reads PRPPVVTIMG…LVQAEVLELK (170 aa). Positions 378–385 are G1; sequence GHVDHGKT. A GTP-binding site is contributed by 378–385; it reads GHVDHGKT. Positions 403-407 are G2; it reads GITQH. The G3 stretch occupies residues 424–427; that stretch reads DTPG. Residues 424–428 and 478–481 contribute to the GTP site; these read DTPGH and NKMD. Residues 478–481 are G4; sequence NKMD. A G5 region spans residues 514 to 516; sequence SAK.

It belongs to the TRAFAC class translation factor GTPase superfamily. Classic translation factor GTPase family. IF-2 subfamily.

Its subcellular location is the cytoplasm. In terms of biological role, one of the essential components for the initiation of protein synthesis. Protects formylmethionyl-tRNA from spontaneous hydrolysis and promotes its binding to the 30S ribosomal subunits. Also involved in the hydrolysis of GTP during the formation of the 70S ribosomal complex. This is Translation initiation factor IF-2 from Methylococcus capsulatus (strain ATCC 33009 / NCIMB 11132 / Bath).